A 142-amino-acid polypeptide reads, in one-letter code: Large ribosomal subunit protein uL13 (142 aa).

This sequence belongs to the universal ribosomal protein uL13 family. In terms of assembly, part of the 50S ribosomal subunit.

Its function is as follows. This protein is one of the early assembly proteins of the 50S ribosomal subunit, although it is not seen to bind rRNA by itself. It is important during the early stages of 50S assembly. In Histophilus somni (strain 129Pt) (Haemophilus somnus), this protein is Large ribosomal subunit protein uL13.